Reading from the N-terminus, the 401-residue chain is Probable 2,3-bisphosphoglycerate-independent phosphoglycerate mutase (401 aa).

This sequence belongs to the BPG-independent phosphoglycerate mutase family. A-PGAM subfamily.

It carries out the reaction (2R)-2-phosphoglycerate = (2R)-3-phosphoglycerate. It functions in the pathway carbohydrate degradation; glycolysis; pyruvate from D-glyceraldehyde 3-phosphate: step 3/5. Catalyzes the interconversion of 2-phosphoglycerate and 3-phosphoglycerate. The protein is Probable 2,3-bisphosphoglycerate-independent phosphoglycerate mutase of Thermotoga neapolitana (strain ATCC 49049 / DSM 4359 / NBRC 107923 / NS-E).